A 151-amino-acid chain; its full sequence is 1,4-dihydroxy-2-naphthoyl-CoA hydrolase (151 aa).

D23 is an active-site residue.

It belongs to the 4-hydroxybenzoyl-CoA thioesterase family. DHNA-CoA hydrolase subfamily.

It carries out the reaction 1,4-dihydroxy-2-naphthoyl-CoA + H2O = 1,4-dihydroxy-2-naphthoate + CoA + H(+). The protein operates within cofactor biosynthesis; phylloquinone biosynthesis. It functions in the pathway quinol/quinone metabolism; 1,4-dihydroxy-2-naphthoate biosynthesis; 1,4-dihydroxy-2-naphthoate from chorismate: step 7/7. In terms of biological role, catalyzes the hydrolysis of 1,4-dihydroxy-2-naphthoyl-CoA (DHNA-CoA) to 1,4-dihydroxy-2-naphthoate (DHNA), a reaction involved in phylloquinone (vitamin K1) biosynthesis. This Prochlorococcus marinus (strain MIT 9211) protein is 1,4-dihydroxy-2-naphthoyl-CoA hydrolase.